The chain runs to 488 residues: Solute carrier family 41 member 3 (488 aa).

Composition is skewed to basic and acidic residues over residues 1-19 and 27-36; these read MEGT…RLKE and DAGRLPKASE. A disordered region spans residues 1–36; that stretch reads MEGTEARQRRLEGCGRLKELGPLPSHDAGRLPKASE. 9 consecutive transmembrane segments (helical) span residues 63–83, 147–167, 189–209, 220–240, 251–271, 284–304, 377–397, 406–426, and 450–470; these read LIIG…LSWA, LAVV…ASLM, VITA…IVIG, IATP…LALM, WYLT…WLFI, YGWF…LILS, VLLF…CLVE, IFIL…LYLA, and GLGD…DWLL.

Belongs to the SLC41A transporter family.

It is found in the mitochondrion inner membrane. The catalysed reaction is Mg(2+)(in) + 2 Na(+)(out) = Mg(2+)(out) + 2 Na(+)(in). In terms of biological role, na(+)/Mg(2+) ion exchanger that acts as a predominant Mg(2+) efflux system at the mitochondrial inner membrane. This is Solute carrier family 41 member 3 (Slc41a3) from Mus musculus (Mouse).